Here is a 513-residue protein sequence, read N- to C-terminus: 2-isopropylmalate synthase (513 aa).

The 263-residue stretch at 4 to 266 (IEFFDTSLRD…QSPLKLSETA (263 aa)) folds into the Pyruvate carboxyltransferase domain. Mn(2+) is bound by residues D13, H201, H203, and N237. The tract at residues 390-513 (ILDNVQIDGH…VEQISAHDGI (124 aa)) is regulatory domain.

The protein belongs to the alpha-IPM synthase/homocitrate synthase family. LeuA type 1 subfamily. In terms of assembly, homodimer. Mn(2+) is required as a cofactor.

It localises to the cytoplasm. It carries out the reaction 3-methyl-2-oxobutanoate + acetyl-CoA + H2O = (2S)-2-isopropylmalate + CoA + H(+). It functions in the pathway amino-acid biosynthesis; L-leucine biosynthesis; L-leucine from 3-methyl-2-oxobutanoate: step 1/4. Functionally, catalyzes the condensation of the acetyl group of acetyl-CoA with 3-methyl-2-oxobutanoate (2-ketoisovalerate) to form 3-carboxy-3-hydroxy-4-methylpentanoate (2-isopropylmalate). The chain is 2-isopropylmalate synthase from Lactococcus lactis subsp. lactis (strain IL1403) (Streptococcus lactis).